The sequence spans 597 residues: Formate--tetrahydrofolate ligase (597 aa).

84-91 is a binding site for ATP; the sequence is TPLGEGKS.

It belongs to the formate--tetrahydrofolate ligase family.

It catalyses the reaction (6S)-5,6,7,8-tetrahydrofolate + formate + ATP = (6R)-10-formyltetrahydrofolate + ADP + phosphate. It functions in the pathway one-carbon metabolism; tetrahydrofolate interconversion. In Dehalococcoides mccartyi (strain ATCC BAA-2266 / KCTC 15142 / 195) (Dehalococcoides ethenogenes (strain 195)), this protein is Formate--tetrahydrofolate ligase.